Here is a 481-residue protein sequence, read N- to C-terminus: ATP synthase subunit beta, plastid (481 aa).

ATP is bound at residue 162–169 (GGAGVGKT).

The protein belongs to the ATPase alpha/beta chains family. As to quaternary structure, F-type ATPases have 2 components, CF(1) - the catalytic core - and CF(0) - the membrane proton channel. CF(1) has five subunits: alpha(3), beta(3), gamma(1), delta(1), epsilon(1). CF(0) has four main subunits: a(1), b(1), b'(1) and c(9-12).

The protein localises to the plastid membrane. It carries out the reaction ATP + H2O + 4 H(+)(in) = ADP + phosphate + 5 H(+)(out). Produces ATP from ADP in the presence of a proton gradient across the membrane. The catalytic sites are hosted primarily by the beta subunits. This chain is ATP synthase subunit beta, plastid (atpB), found in Prototheca wickerhamii.